The sequence spans 217 residues: Ribosomal RNA small subunit methyltransferase G (217 aa).

Residues G78, F83, A129 to E130, and R146 contribute to the S-adenosyl-L-methionine site.

It belongs to the methyltransferase superfamily. RNA methyltransferase RsmG family.

It is found in the cytoplasm. The enzyme catalyses guanosine(527) in 16S rRNA + S-adenosyl-L-methionine = N(7)-methylguanosine(527) in 16S rRNA + S-adenosyl-L-homocysteine. Its function is as follows. Specifically methylates the N7 position of guanine in position 527 of 16S rRNA. The protein is Ribosomal RNA small subunit methyltransferase G of Geobacter sp. (strain M21).